A 224-amino-acid polypeptide reads, in one-letter code: PKHD-type hydroxylase CYB_2270 (224 aa).

The Fe2OG dioxygenase domain maps to 78 to 176 (LIHSILISCY…RYAAVSWVQS (99 aa)). The Fe cation site is built by His96, Asp98, and His157. Arg167 serves as a coordination point for 2-oxoglutarate.

Fe(2+) serves as cofactor. The cofactor is L-ascorbate.

In Synechococcus sp. (strain JA-2-3B'a(2-13)) (Cyanobacteria bacterium Yellowstone B-Prime), this protein is PKHD-type hydroxylase CYB_2270.